The following is a 326-amino-acid chain: 4-hydroxythreonine-4-phosphate dehydrogenase (326 aa).

Thr-132 serves as a coordination point for substrate. A divalent metal cation is bound by residues His-160, His-205, and His-260. Positions 268, 277, and 286 each coordinate substrate.

It belongs to the PdxA family. As to quaternary structure, homodimer. Requires Zn(2+) as cofactor. Mg(2+) serves as cofactor. Co(2+) is required as a cofactor.

The protein resides in the cytoplasm. The catalysed reaction is 4-(phosphooxy)-L-threonine + NAD(+) = 3-amino-2-oxopropyl phosphate + CO2 + NADH. It participates in cofactor biosynthesis; pyridoxine 5'-phosphate biosynthesis; pyridoxine 5'-phosphate from D-erythrose 4-phosphate: step 4/5. Functionally, catalyzes the NAD(P)-dependent oxidation of 4-(phosphooxy)-L-threonine (HTP) into 2-amino-3-oxo-4-(phosphooxy)butyric acid which spontaneously decarboxylates to form 3-amino-2-oxopropyl phosphate (AHAP). The polypeptide is 4-hydroxythreonine-4-phosphate dehydrogenase (Stenotrophomonas maltophilia (strain R551-3)).